Consider the following 198-residue polypeptide: Transmembrane protein 17 (198 aa).

N-linked (GlcNAc...) asparagine glycans are attached at residues Asn-13 and Asn-23. Helical transmembrane passes span 45–65, 78–98, 110–130, and 142–162; these read MSLYFNTYFFPLWWVSSIMML, FIVVTIIILITLIEAIRLYLG, LAGFWLLSLLLQLPLILFLLF, and AVHIIFTIFLTFQVVSAFLTL.

Belongs to the TMEM17 family. In terms of assembly, part of the tectonic-like complex (also named B9 complex).

It localises to the cell projection. Its subcellular location is the cilium membrane. Functionally, transmembrane component of the tectonic-like complex, a complex localized at the transition zone of primary cilia and acting as a barrier that prevents diffusion of transmembrane proteins between the cilia and plasma membranes. Required for ciliogenesis and sonic hedgehog/SHH signaling. The polypeptide is Transmembrane protein 17 (TMEM17) (Bos taurus (Bovine)).